Reading from the N-terminus, the 376-residue chain is Chaperone protein DnaJ (376 aa).

The region spanning 4–68 (DYYDILGVDR…DTRSRYDQFG (65 aa)) is the J domain. Residues 135-217 (GGEKEIRIPH…CNGAGRRQVT (83 aa)) form a CR-type zinc finger. Zn(2+) is bound by residues C148, C151, C165, C168, C191, C194, C205, and C208. CXXCXGXG motif repeat units follow at residues 148–155 (CQVCKGDG), 165–172 (CSTCNGQG), 191–198 (CPACNGQG), and 205–212 (CEVCNGAG).

It belongs to the DnaJ family. In terms of assembly, homodimer. Requires Zn(2+) as cofactor.

It is found in the cytoplasm. Participates actively in the response to hyperosmotic and heat shock by preventing the aggregation of stress-denatured proteins and by disaggregating proteins, also in an autonomous, DnaK-independent fashion. Unfolded proteins bind initially to DnaJ; upon interaction with the DnaJ-bound protein, DnaK hydrolyzes its bound ATP, resulting in the formation of a stable complex. GrpE releases ADP from DnaK; ATP binding to DnaK triggers the release of the substrate protein, thus completing the reaction cycle. Several rounds of ATP-dependent interactions between DnaJ, DnaK and GrpE are required for fully efficient folding. Also involved, together with DnaK and GrpE, in the DNA replication of plasmids through activation of initiation proteins. The protein is Chaperone protein DnaJ of Crocosphaera subtropica (strain ATCC 51142 / BH68) (Cyanothece sp. (strain ATCC 51142)).